The primary structure comprises 436 residues: 3-ketoacyl-CoA thiolase (436 aa).

Cys-99 functions as the Acyl-thioester intermediate in the catalytic mechanism. Residues His-392 and Cys-422 each act as proton acceptor in the active site.

It belongs to the thiolase-like superfamily. Thiolase family. Heterotetramer of two alpha chains (FadJ) and two beta chains (FadI).

It localises to the cytoplasm. The enzyme catalyses an acyl-CoA + acetyl-CoA = a 3-oxoacyl-CoA + CoA. It participates in lipid metabolism; fatty acid beta-oxidation. In terms of biological role, catalyzes the final step of fatty acid oxidation in which acetyl-CoA is released and the CoA ester of a fatty acid two carbons shorter is formed. The polypeptide is 3-ketoacyl-CoA thiolase (Shewanella baltica (strain OS155 / ATCC BAA-1091)).